A 103-amino-acid chain; its full sequence is Large ribosomal subunit protein bL21 (103 aa).

The protein belongs to the bacterial ribosomal protein bL21 family. As to quaternary structure, part of the 50S ribosomal subunit. Contacts protein L20.

Its function is as follows. This protein binds to 23S rRNA in the presence of protein L20. This is Large ribosomal subunit protein bL21 from Leptothrix cholodnii (strain ATCC 51168 / LMG 8142 / SP-6) (Leptothrix discophora (strain SP-6)).